Reading from the N-terminus, the 491-residue chain is Probable protein phosphatase 2C 6 (491 aa).

Residues 1 to 16 (MGLCHSKIDKTTRKET) show a composition bias toward basic and acidic residues. The segment at 1–39 (MGLCHSKIDKTTRKETGATSTATTTVERQSSGRLRRPRD) is disordered. Residues 17–28 (GATSTATTTVER) show a composition bias toward low complexity. A PPM-type phosphatase domain is found at 64–376 (IACLYTQQGK…DDCAVVCLFL (313 aa)). 4 residues coordinate Mn(2+): aspartate 100, glycine 101, aspartate 321, and aspartate 367. The segment at 391-422 (VNHSHEESTESVTITSSKDADKKEEASTETNE) is disordered.

It belongs to the PP2C family. Requires Mg(2+) as cofactor. Mn(2+) is required as a cofactor.

The catalysed reaction is O-phospho-L-seryl-[protein] + H2O = L-seryl-[protein] + phosphate. The enzyme catalyses O-phospho-L-threonyl-[protein] + H2O = L-threonyl-[protein] + phosphate. The chain is Probable protein phosphatase 2C 6 from Arabidopsis thaliana (Mouse-ear cress).